A 426-amino-acid polypeptide reads, in one-letter code: Testicular acid phosphatase (426 aa).

Residues 1 to 26 (MAGLGFWGHPAGPLLLLLLLVLPPRA) form the signal peptide. Residues 27–393 (LPEGPLVFVA…AAIPPAPVVP (367 aa)) lie on the Extracellular side of the membrane. His41 functions as the Nucleophile in the catalytic mechanism. 3 disulfide bridges follow: Cys159/Cys378, Cys214/Cys312, and Cys353/Cys357. Residues Asn191 and Asn269 are each glycosylated (N-linked (GlcNAc...) asparagine). Asp289 serves as the catalytic Proton donor. Asn330 and Asn339 each carry an N-linked (GlcNAc...) asparagine glycan. The chain crosses the membrane as a helical span at residues 394 to 414 (LLAGAVAVLVALSLGLGLLAW). The Cytoplasmic portion of the chain corresponds to 415–426 (RPGCLRALGGPV).

Belongs to the histidine acid phosphatase family. As to quaternary structure, homodimer. In terms of processing, glycosylated. Expressed mainly in the testis. Also expressed in the brain where they are enriched at the postsynaptic sites. Expressed at lower levels in the trachea, prostate, bone marrow, spinal cord, colon, fetal brain, heart, thymus, fetal liver, spleen, leukocytes, ovary, small intestine, pancreas and skeletal muscle. Expression is significantly lower in testicular cancer tissues than in normal testicular tissues. Isoform 3 is expressed in the testis, trachea, prostate and bone marrow.

Its subcellular location is the membrane. It catalyses the reaction a phosphate monoester + H2O = an alcohol + phosphate. Functionally, may dephosphorylate receptor tyrosine-protein kinase ERBB4 and inhibits its ligand-induced proteolytic cleavage. May play a role in odontogenesis. This Homo sapiens (Human) protein is Testicular acid phosphatase.